A 508-amino-acid chain; its full sequence is MERNKNYYINVFHKQAENDLNFNKFYFYFFQETFYCLAYKQVSYKFLQNNVFIKKKKKFSFFNLKRTIRSMRNQNYKESFFFIEQKKLSKKLLFSKLFYELLQEILKCILEISFKIKKNPKISSYSTMSSIHGPFISFEENLIYFPVAIQSYLPNRVHPELIVRILRSYNLDVNLFHFLRNIVHNGLYILSPPFLLNFGFRSLSTIFFNIYAYEIDLGFLSFLKLQKDLPQKYQTELDIFSSSRKITFYFKNYSDFNNLKKIDQIERKYNNIIDYGPIYYLRYSNILLISLNLIKKNANFFQLIYIRFFHLRFHFLFAKNLVKKISFNQDQIFFLGFLVFFFYTKIQIRIKLKKCLVNFIKLEKKICINVPIKLLIIFLSKNGFCDISGNSKSKLSWSVLQDIEIIEKFRRLWLTISGYYSGSSNKYCLKIVLYILRYSCAKTLACKHKMSLKKIWKKYTLNLSVTLKFQTGKKKFLSFSHFKDFHKDEKSWQLNLKETNSIVYTFWN.

The protein belongs to the intron maturase 2 family. MatK subfamily.

It localises to the plastid. The protein localises to the chloroplast. Usually encoded in the trnK tRNA gene intron. Probably assists in splicing its own and other chloroplast group II introns. This is Maturase K from Chaetosphaeridium globosum (Charophycean green alga).